We begin with the raw amino-acid sequence, 187 residues long: Accessory gene regulator protein B (187 aa).

Helical transmembrane passes span 49 to 69 (ISIF…YMLI), 82 to 102 (ILCY…LINI), 106 to 126 (FTYL…YAPA), 144 to 164 (VSII…PFYA), and 166 to 186 (FMLL…FPKE).

Belongs to the AgrB family.

It is found in the cell membrane. Essential for the production of a quorum sensing system signal molecule, the autoinducing peptide (AIP). This quorum sensing system is responsible for the regulation of the expression of virulence factor genes. Involved in the proteolytic processing of AgrD, the precursor of AIP. This chain is Accessory gene regulator protein B, found in Staphylococcus aureus (strain bovine RF122 / ET3-1).